We begin with the raw amino-acid sequence, 445 residues long: Argininosuccinate synthase (445 aa).

Residues 17-25 (AFSGGLDTS) and alanine 43 each bind ATP. Tyrosine 99 is an L-citrulline binding site. Positions 129 and 131 each coordinate ATP. Positions 131, 135, and 136 each coordinate L-aspartate. An L-citrulline-binding site is contributed by asparagine 135. Residue aspartate 136 coordinates ATP. Residues arginine 139 and serine 192 each coordinate L-citrulline. Aspartate 194 serves as a coordination point for ATP. Positions 201, 203, and 280 each coordinate L-citrulline.

It belongs to the argininosuccinate synthase family. Type 2 subfamily. In terms of assembly, homotetramer.

It is found in the cytoplasm. It catalyses the reaction L-citrulline + L-aspartate + ATP = 2-(N(omega)-L-arginino)succinate + AMP + diphosphate + H(+). Its pathway is amino-acid biosynthesis; L-arginine biosynthesis; L-arginine from L-ornithine and carbamoyl phosphate: step 2/3. The sequence is that of Argininosuccinate synthase (argG) from Bradyrhizobium diazoefficiens (strain JCM 10833 / BCRC 13528 / IAM 13628 / NBRC 14792 / USDA 110).